A 440-amino-acid polypeptide reads, in one-letter code: Tryptophan synthase beta chain (440 aa).

Lysine 110 bears the N6-(pyridoxal phosphate)lysine mark.

Belongs to the TrpB family. As to quaternary structure, tetramer of two alpha and two beta chains. The cofactor is pyridoxal 5'-phosphate.

It catalyses the reaction (1S,2R)-1-C-(indol-3-yl)glycerol 3-phosphate + L-serine = D-glyceraldehyde 3-phosphate + L-tryptophan + H2O. It participates in amino-acid biosynthesis; L-tryptophan biosynthesis; L-tryptophan from chorismate: step 5/5. Functionally, the beta subunit is responsible for the synthesis of L-tryptophan from indole and L-serine. This Thermococcus gammatolerans (strain DSM 15229 / JCM 11827 / EJ3) protein is Tryptophan synthase beta chain.